The primary structure comprises 194 residues: Probable thymidylate kinase (194 aa).

Residue 9-16 participates in ATP binding; that stretch reads GIDGVGKS.

Belongs to the thymidylate kinase family.

The catalysed reaction is dTMP + ATP = dTDP + ADP. The sequence is that of Probable thymidylate kinase from Methanopyrus kandleri (strain AV19 / DSM 6324 / JCM 9639 / NBRC 100938).